We begin with the raw amino-acid sequence, 453 residues long: 13-hydroxylupanine O-tigloyltransferase (453 aa).

Residues histidine 166 and aspartate 385 each act as proton acceptor in the active site.

It belongs to the plant acyltransferase family. As to quaternary structure, monomer. As to expression, expressed in roots and hypocotyls. Detected in seeds, leaves and cotyledons, but not in young developing leaves.

The catalysed reaction is 13-hydroxylupanine + (2E)-2-methylbut-2-enoyl-CoA = 13-(2-methylcrotonoyloxy)lupanine + CoA. Inhibited by N-ethylmaleimide, p-chloromercuribenzoic acid and diethylpyrocarbonate (DEPC). In terms of biological role, acyl-CoA-dependent acyltransferase involved in the synthesis of lupanine alkaloids. Can use both (-)-13alpha-hydroxymultiflorine and (+)-13alpha-hydroxylupanine as substrates. Lower activity with (-)-3beta, 13alpha-dihydroxylupanine, but no activity with (+)-epilupinine and (-)-lupinine as substrates. Tigloyl-CoA, benzoyl-CoA and, more slowly, acetyl-CoA, propionyl-CoA and 2-butenoyl-CoA can act as acyl donors. The polypeptide is 13-hydroxylupanine O-tigloyltransferase (HMT/HLT) (Lupinus albus (White lupine)).